The sequence spans 510 residues: Myosin-binding protein C, cardiac-type (510 aa).

Ig-like C2-type domains follow at residues 177 to 269 (KKST…VKEP), 270 to 347 (PYSS…TVKT), and 378 to 438 (RDQA…SFIP).

Belongs to the immunoglobulin superfamily. MyBP family. As to expression, heart.

In terms of biological role, thick filament-associated protein located in the crossbridge region of vertebrate striated muscle a bands. In vitro it binds MHC, F-actin and native thin filaments, and modifies the activity of actin-activated myosin ATPase. It may modulate muscle contraction or may play a more structural role. This Ambystoma mexicanum (Axolotl) protein is Myosin-binding protein C, cardiac-type.